Consider the following 302-residue polypeptide: Large ribosomal subunit protein uL4m (302 aa).

It belongs to the universal ribosomal protein uL4 family. Component of the mitochondrial ribosome large subunit (39S) which comprises a 16S rRNA and about 50 distinct proteins.

The protein resides in the mitochondrion. The chain is Large ribosomal subunit protein uL4m (mrpl4) from Danio rerio (Zebrafish).